A 428-amino-acid polypeptide reads, in one-letter code: AP-1 complex subunit mu (428 aa).

Alanine 2 bears the N-acetylalanine; partial mark. Residues 169 to 426 (KNEVFLDVVE…VCLSGDYQFR (258 aa)) form the MHD domain.

This sequence belongs to the adaptor complexes medium subunit family. As to quaternary structure, adaptor protein complex 1 (AP-1) is a heterotetramer composed of two large adaptins (gamma-type subunit and beta-type subunit), a medium adaptin (mu-type subunit) and a small adaptin (sigma-type subunit).

Its subcellular location is the golgi apparatus. It localises to the trans-Golgi network. It is found in the cytoplasmic vesicle. The protein localises to the clathrin-coated vesicle membrane. Subunit of clathrin-associated adaptor protein complex 1 that plays a role in protein sorting in the trans-Golgi network (TGN) and endosomes. The AP complexes mediate the recruitment of clathrin to membranes and the recognition of sorting signals within the cytosolic tails of transmembrane cargo molecules. Also involved in early steps of phagocytosis and macropinocytosis. This Dictyostelium discoideum (Social amoeba) protein is AP-1 complex subunit mu (apm1).